The sequence spans 475 residues: 7-dehydrocholesterol reductase (475 aa).

The tract at residues 1–21 (MAAKSQPSAPKTKSTSGLTNG) is disordered. Ser-14 bears the Phosphoserine mark. The next 6 helical transmembrane spans lie at 40-60 (LASV…FIMA), 151-173 (WLLT…PTII), 178-200 (IPLL…VKGY), 266-286 (VTNS…DFFW), 306-326 (LGWG…LYLV), and 331-351 (QLPT…YYIF). NADP(+)-binding positions include Lys-358, Arg-362, Leu-395, Trp-400, and 407 to 408 (NY). The helical transmembrane segment at 420–440 (LACGGGHLLPYFYIIFMAILL) threads the bilayer. NADP(+) contacts are provided by residues Asp-447, 451 to 455 (CANKY), and Tyr-462.

This sequence belongs to the ERG4/ERG24 family. In terms of assembly, interacts with DHCR24; this interaction regulates DHCR7 activity. Interacts with TMEM147.

Its subcellular location is the endoplasmic reticulum membrane. It carries out the reaction cholesterol + NADP(+) = 7-dehydrocholesterol + NADPH + H(+). The catalysed reaction is 7-dehydrodesmosterol + NADPH + H(+) = desmosterol + NADP(+). It catalyses the reaction 5,6alpha-epoxy-5alpha-cholestan-3beta-ol + H2O = 5alpha-cholestane-3beta,5,6beta-triol. The enzyme catalyses 5,6beta-epoxy-5beta-cholestan-3beta-ol + H2O = 5alpha-cholestane-3beta,5,6beta-triol. The protein operates within steroid biosynthesis; cholesterol biosynthesis. In terms of biological role, oxidoreductase that catalyzes the last step of the cholesterol synthesis pathway, which transforms cholesta-5,7-dien-3beta-ol (7-dehydrocholesterol,7-DHC) into cholesterol by reducing the C7-C8 double bond of its sterol core. Can also metabolize cholesta-5,7,24-trien-3beta-ol (7-dehydrodemosterol, 7-DHD) to desmosterol, which is then metabolized by the Delta(24)-sterol reductase (DHCR24) to cholesterol. Modulates ferroptosis (a form of regulated cell death driven by iron-dependent lipid peroxidation) through the metabolic breakdown of the anti-ferroptotic metabolites 7-DHC and 7-DHD which, when accumulated, divert the propagation of peroxyl radical-mediated damage from phospholipid components to its sterol core, protecting plasma and mitochondrial membranes from phospholipid autoxidation. Component of the microsomal antiestrogen binding site (AEBS), a multiproteic complex at the ER membrane that consists of an association between cholestenol Delta-isomerase/EBP and DHCR7. This complex is responsible for cholesterol-5,6-epoxide hydrolase (ChEH) activity, which consists in the hydration of cholesterol-5,6-epoxides (5,6-EC) into cholestane-3beta,5alpha,6beta-triol (CT). The precise role of each component of this complex has not been described yet. This Bos taurus (Bovine) protein is 7-dehydrocholesterol reductase (DHCR7).